A 277-amino-acid chain; its full sequence is Thymidylate synthase (277 aa).

Arg-21 is a binding site for dUMP. Position 51 (His-51) interacts with (6R)-5,10-methylene-5,6,7,8-tetrahydrofolate. Residue 126-127 (RR) participates in dUMP binding. Cys-159 functions as the Nucleophile in the catalytic mechanism. DUMP contacts are provided by residues 179–182 (RSSD), Asn-190, and 220–222 (HAY). (6R)-5,10-methylene-5,6,7,8-tetrahydrofolate is bound at residue Asp-182. Ala-276 lines the (6R)-5,10-methylene-5,6,7,8-tetrahydrofolate pocket.

It belongs to the thymidylate synthase family. Bacterial-type ThyA subfamily. As to quaternary structure, homodimer.

Its subcellular location is the cytoplasm. It catalyses the reaction dUMP + (6R)-5,10-methylene-5,6,7,8-tetrahydrofolate = 7,8-dihydrofolate + dTMP. Its pathway is pyrimidine metabolism; dTTP biosynthesis. Catalyzes the reductive methylation of 2'-deoxyuridine-5'-monophosphate (dUMP) to 2'-deoxythymidine-5'-monophosphate (dTMP) while utilizing 5,10-methylenetetrahydrofolate (mTHF) as the methyl donor and reductant in the reaction, yielding dihydrofolate (DHF) as a by-product. This enzymatic reaction provides an intracellular de novo source of dTMP, an essential precursor for DNA biosynthesis. This is Thymidylate synthase from Pseudomonas fluorescens (strain SBW25).